A 317-amino-acid chain; its full sequence is Transaldolase (317 aa).

The Schiff-base intermediate with substrate role is filled by Lys-126.

It belongs to the transaldolase family. Type 1 subfamily. In terms of assembly, homodimer.

It localises to the cytoplasm. It catalyses the reaction D-sedoheptulose 7-phosphate + D-glyceraldehyde 3-phosphate = D-erythrose 4-phosphate + beta-D-fructose 6-phosphate. It participates in carbohydrate degradation; pentose phosphate pathway; D-glyceraldehyde 3-phosphate and beta-D-fructose 6-phosphate from D-ribose 5-phosphate and D-xylulose 5-phosphate (non-oxidative stage): step 2/3. In terms of biological role, transaldolase is important for the balance of metabolites in the pentose-phosphate pathway. The chain is Transaldolase from Burkholderia orbicola (strain MC0-3).